The following is a 78-amino-acid chain: Small ribosomal subunit protein bS18 (78 aa).

It belongs to the bacterial ribosomal protein bS18 family. Part of the 30S ribosomal subunit. Forms a tight heterodimer with protein bS6.

Binds as a heterodimer with protein bS6 to the central domain of the 16S rRNA, where it helps stabilize the platform of the 30S subunit. This chain is Small ribosomal subunit protein bS18, found in Limosilactobacillus reuteri (strain DSM 20016) (Lactobacillus reuteri).